A 94-amino-acid polypeptide reads, in one-letter code: Pyrimidine/purine nucleoside phosphorylase (94 aa).

Belongs to the nucleoside phosphorylase PpnP family.

The enzyme catalyses a purine D-ribonucleoside + phosphate = a purine nucleobase + alpha-D-ribose 1-phosphate. It catalyses the reaction adenosine + phosphate = alpha-D-ribose 1-phosphate + adenine. The catalysed reaction is cytidine + phosphate = cytosine + alpha-D-ribose 1-phosphate. It carries out the reaction guanosine + phosphate = alpha-D-ribose 1-phosphate + guanine. The enzyme catalyses inosine + phosphate = alpha-D-ribose 1-phosphate + hypoxanthine. It catalyses the reaction thymidine + phosphate = 2-deoxy-alpha-D-ribose 1-phosphate + thymine. The catalysed reaction is uridine + phosphate = alpha-D-ribose 1-phosphate + uracil. It carries out the reaction xanthosine + phosphate = alpha-D-ribose 1-phosphate + xanthine. Catalyzes the phosphorolysis of diverse nucleosides, yielding D-ribose 1-phosphate and the respective free bases. Can use uridine, adenosine, guanosine, cytidine, thymidine, inosine and xanthosine as substrates. Also catalyzes the reverse reactions. The sequence is that of Pyrimidine/purine nucleoside phosphorylase from Salmonella typhimurium (strain LT2 / SGSC1412 / ATCC 700720).